The following is a 148-amino-acid chain: Oleosin 1 (148 aa).

N-acetylalanine is present on alanine 2. A polar region spans residues 2-28; the sequence is ADQHFQQPLHFQGSYGQQQPRSYQVAK. The hydrophobic stretch occupies residues 29 to 148; sequence AATAVTAGGS…HVPSGQQQSS (120 aa). The next 2 membrane-spanning stretches (helical) occupy residues 37–57 and 81–101; these read GSLLVLSGLVLAGTVIALTIA and GFLTSGGFGVAAVTVLSWIYK.

It belongs to the oleosin family.

It localises to the lipid droplet. Its subcellular location is the membrane. Functionally, may have a structural role to stabilize the lipid body during desiccation of the seed by preventing coalescence of the oil. Probably interacts with both lipid and phospholipid moieties of lipid bodies. May also provide recognition signals for specific lipase anchorage in lipolysis during seedling growth. This is Oleosin 1 (OLE1) from Prunus dulcis (Almond).